Here is a 397-residue protein sequence, read N- to C-terminus: Keratinocyte differentiation factor 1 (397 aa).

The segment covering 1–16 (MPRPGQPRPSSGPPRL) has biased composition (pro residues). Disordered regions lie at residues 1 to 67 (MPRP…SAEP), 124 to 158 (EAAWAKEHNGVPPSPDRAPPSRRDGQKLKTSMGSS), and 191 to 214 (PLADPPPTRHSLPSTFTSSPRGSE). Positions 44–55 (RPDPKDPGHHGP) are enriched in basic and acidic residues. Over residues 201–211 (SLPSTFTSSPR) the composition is skewed to polar residues. A Phosphoserine modification is found at S218. 2 disordered regions span residues 304 to 339 (ISTRKSRSRPQTSEGRSARSTAPAAAPDSGHETMVG) and 361 to 392 (ARKLRPYGAPGYPASQDSSFQGTDTDSSGAPL). A compositionally biased stretch (low complexity) spans 321–330 (ARSTAPAAAP). Polar residues predominate over residues 375–388 (SQDSSFQGTDTDSS).

The protein resides in the cytoplasm. It localises to the cell junction. In terms of biological role, plays a role in the regulation of the epidermis formation during early development. Required both as an inhibitor of basal cell proliferation and a promoter of differentiation of basal progenitor cell progeny. The protein is Keratinocyte differentiation factor 1 (Kdf1) of Rattus norvegicus (Rat).